The following is an 886-amino-acid chain: Protein suppressor of hairy wing (886 aa).

2 disordered regions span residues 24 to 62 (SVSP…GIKG) and 167 to 211 (DEVV…KNSG). Over residues 184-201 (VTEEEEEEEEDDLDEEGD) the composition is skewed to acidic residues. A C2H2-type 1; atypical zinc finger spans residues 221–243 (HVCGKCYKTFRRLMSLKKHLEFC). The C2H2-type 2 zinc-finger motif lies at 291-314 (INCPDCPKSFKTQTSYERHIFITH). A C2H2-type 3; atypical zinc finger spans residues 320–342 (YPCSICNANLRSEALLKLHEEQH). 9 consecutive C2H2-type zinc fingers follow at residues 349–367 (YACK…LKRH), 381–403 (MSCK…LKHH), 414–436 (YMCH…IRTH), 442–464 (FDCD…RRYH), 470–492 (YSCT…MKRH), 498–520 (HKCE…SKTH), 524–546 (FACD…VKEH), 554–578 (FSCT…AGDH), and 600–623 (TDCA…RSVH). The span at 571 to 587 (QHMDAGDHSEKSGEKPQ) shows a compositional bias: basic and acidic residues. Residues 571-594 (QHMDAGDHSEKSGEKPQRAKRSST) are disordered.

The protein resides in the nucleus. Its function is as follows. Component of the gypsy chromatin insulator complex which is required for the function of the gypsy chromatin insulator and other endogenous chromatin insulators. Chromatin insulators are regulatory elements which establish independent domains of transcriptional activity within eukaryotic genomes. Insulators have two defining properties; they can block the communication between an enhancer and a promoter when placed between them and can also buffer transgenes from position effect variegation (PEV). Insulators are proposed to structure the chromatin fiber into independent domains of differing transcriptional potential by promoting the formation of distinct chromatin loops. This chromatin looping may involve the formation of insulator bodies, where homotypic interactions between individual subunits of the insulator complex could promote the clustering of widely spaced insulators at the nuclear periphery. Within the gypsy insulator complex, this protein binds specifically to a region of the gypsy element located 3' of the 5' long terminal repeat (LTR), and may also mediate interaction with other endogenous insulators at sites distinct from those recognized by Cp190. Cooperates with pita and cliff to recruit Cp190 and regulate insulator function at the front-ultraabdominal (Fub) boundary. The protein is Protein suppressor of hairy wing (su(Hw)) of Drosophila ananassae (Fruit fly).